The primary structure comprises 306 residues: MGEFQDVDKYISILKECKPLSESEVRDLCEKAREILSKESNVQPVRCPVTVCGDIHGQFHDLMELFKIGGNCPDTNYLFMGDYVDRGFYSVETVTLLVALKVRYKDRVTILRGNHESRQITQVYGFYDECLRKYGNPNVWKLFTDLFDYLPLTALIENQVFCLHGGLSPSIDTLDHIENLDRVQEVPHEGAMCDLLWSDPDDRLGFGYSPRGAGYTFGKDISEQFNHNNGLTLVARAHQLVMEGYNWCHDQNVVTIFSAPNYCYRCGNLAAIMEIDEKMKHTFLQFDPAPRRGEPHVTRRTPDYFL.

Mn(2+)-binding residues include D54, H56, D82, and N114. The active-site Proton donor is H115. H164 and H238 together coordinate Mn(2+). Residue L306 is modified to Leucine methyl ester.

Belongs to the PPP phosphatase family. PP-2A subfamily. PP2A consists of a trimeric holoenzyme, composed of a 37 kDa catalytic subunit (C subunit) and a 65 kDa constant regulatory subunit (A subunit), that associates with a variety of regulatory subunits (B subunit) such as phr2AB (B55) and psrA (B56 homolog). The trimer may partially dissociates into a core 'AC' dimer equally active compared to the trimer. Mn(2+) serves as cofactor. Post-translationally, reversibly methyl esterified on Leu-306 by leucine carboxyl methyltransferase 1 (LCMT) and protein phosphatase methylesterase 1 (PPME1). Carboxyl methylation influences the affinity of the catalytic subunit for the different regulatory subunits, thereby modulating the PP2A holoenzyme's substrate specificity, enzyme activity and cellular localization.

Its subcellular location is the cytoplasm. The protein resides in the cytosol. It localises to the nucleus speckle. The catalysed reaction is O-phospho-L-seryl-[protein] + H2O = L-seryl-[protein] + phosphate. It catalyses the reaction O-phospho-L-threonyl-[protein] + H2O = L-threonyl-[protein] + phosphate. Its function is as follows. Plays a role in activating the myosin contractile function. Dephosphorylates threonine at 'Thr-1823', 'Thr-1833' and 'Thr-2029' in the C-terminal tail region of myosin II heavy chain (mhcA). Drives the assembly of dephosphorylated myosin II filaments to allow myosin recruitment into the cytoskeleton. The sequence is that of Serine/threonine-protein phosphatase 2A catalytic subunit A (pho2a) from Dictyostelium discoideum (Social amoeba).